Here is a 500-residue protein sequence, read N- to C-terminus: NAD(P)H-quinone oxidoreductase subunit 2 B, chloroplastic (500 aa).

The next 13 helical transmembrane spans lie at 14-34 (SILPECILISSLIIILLIDLT), 41-61 (WLYFISLTSLIISITVLLFQL), 78-98 (FNGIFRISIAFSSLLCIPLSM), 116-136 (LTATIGGMFLCGANDLIIIFI), 166-186 (LLMGGASSSILAYGFSWLYGL), 211-231 (ISIVLIFIIAGIAFKLSLVPF), 242-262 (APTSVIAFFSVTSKIAGLALA), 277-297 (WHLILEIIAILSMILGNFIAI), 305-325 (MLAYSSISQIGYFMIGVIAGD), 335-355 (YMLFYIFMNLGTFACITLFGL), 376-396 (ASFLALSLLSLGGIPPLAGFF), 409-429 (GLYLSVSVGLFTSVISIYYYL), and 467-487 (IIICVIGSTFSGIVINPVIAI).

This sequence belongs to the complex I subunit 2 family. As to quaternary structure, NDH is composed of at least 16 different subunits, 5 of which are encoded in the nucleus.

It is found in the plastid. The protein localises to the chloroplast thylakoid membrane. The enzyme catalyses a plastoquinone + NADH + (n+1) H(+)(in) = a plastoquinol + NAD(+) + n H(+)(out). It catalyses the reaction a plastoquinone + NADPH + (n+1) H(+)(in) = a plastoquinol + NADP(+) + n H(+)(out). NDH shuttles electrons from NAD(P)H:plastoquinone, via FMN and iron-sulfur (Fe-S) centers, to quinones in the photosynthetic chain and possibly in a chloroplast respiratory chain. The immediate electron acceptor for the enzyme in this species is believed to be plastoquinone. Couples the redox reaction to proton translocation, and thus conserves the redox energy in a proton gradient. In Anthoceros angustus (Hornwort), this protein is NAD(P)H-quinone oxidoreductase subunit 2 B, chloroplastic.